We begin with the raw amino-acid sequence, 112 residues long: uncharacterized protein (112 aa).

2 consecutive transmembrane segments (helical) span residues 55–75 (LLEINLLVAATVIHLIAPTLF) and 91–111 (LIMLGLRIAVLLAKQLLLLLL).

It localises to the membrane. This is an uncharacterized protein from Saccharomyces cerevisiae (strain ATCC 204508 / S288c) (Baker's yeast).